A 345-amino-acid polypeptide reads, in one-letter code: tRNA pseudouridine synthase B (345 aa).

Catalysis depends on Asp39, which acts as the Nucleophile.

The protein belongs to the pseudouridine synthase TruB family. Type 1 subfamily.

It catalyses the reaction uridine(55) in tRNA = pseudouridine(55) in tRNA. In terms of biological role, responsible for synthesis of pseudouridine from uracil-55 in the psi GC loop of transfer RNAs. In Rickettsia africae (strain ESF-5), this protein is tRNA pseudouridine synthase B.